A 271-amino-acid chain; its full sequence is Formamidopyrimidine-DNA glycosylase (271 aa).

Catalysis depends on P2, which acts as the Schiff-base intermediate with DNA. Residue E3 is the Proton donor of the active site. K58 serves as the catalytic Proton donor; for beta-elimination activity. The DNA site is built by H92, R111, and R152. The FPG-type zinc-finger motif lies at 237–271; the sequence is MVYGREGEACRHCGGELKHATIGQRATVWCAACQR. R261 functions as the Proton donor; for delta-elimination activity in the catalytic mechanism.

This sequence belongs to the FPG family. As to quaternary structure, monomer. The cofactor is Zn(2+).

The catalysed reaction is Hydrolysis of DNA containing ring-opened 7-methylguanine residues, releasing 2,6-diamino-4-hydroxy-5-(N-methyl)formamidopyrimidine.. It carries out the reaction 2'-deoxyribonucleotide-(2'-deoxyribose 5'-phosphate)-2'-deoxyribonucleotide-DNA = a 3'-end 2'-deoxyribonucleotide-(2,3-dehydro-2,3-deoxyribose 5'-phosphate)-DNA + a 5'-end 5'-phospho-2'-deoxyribonucleoside-DNA + H(+). Involved in base excision repair of DNA damaged by oxidation or by mutagenic agents. Acts as a DNA glycosylase that recognizes and removes damaged bases. Has a preference for oxidized purines, such as 7,8-dihydro-8-oxoguanine (8-oxoG). Has AP (apurinic/apyrimidinic) lyase activity and introduces nicks in the DNA strand. Cleaves the DNA backbone by beta-delta elimination to generate a single-strand break at the site of the removed base with both 3'- and 5'-phosphates. The chain is Formamidopyrimidine-DNA glycosylase from Xanthomonas campestris pv. campestris (strain ATCC 33913 / DSM 3586 / NCPPB 528 / LMG 568 / P 25).